Reading from the N-terminus, the 141-residue chain is Hemoglobin subunit alpha-1/2 (141 aa).

Residues 1–141 (VLSPADKKNV…VSTVLTSKYR (141 aa)) form the Globin domain. Ser3 carries the phosphoserine modification. 2 positions are modified to N6-succinyllysine: Lys7 and Lys11. An N6-acetyllysine; alternate modification is found at Lys16. At Lys16 the chain carries N6-succinyllysine; alternate. Position 24 is a phosphotyrosine (Tyr24). Ser35 is subject to Phosphoserine. Lys40 carries the post-translational modification N6-succinyllysine. Phosphoserine is present on Ser49. Position 58 (His58) interacts with O2. His87 contacts heme b. Phosphoserine is present on Ser102. Residue Thr108 is modified to Phosphothreonine. Ser124 and Ser131 each carry phosphoserine. A phosphothreonine mark is found at Thr134 and Thr137. At Ser138 the chain carries Phosphoserine.

It belongs to the globin family. In terms of assembly, heterotetramer of two alpha chains and two beta chains. In terms of tissue distribution, red blood cells.

Its function is as follows. Involved in oxygen transport from the lung to the various peripheral tissues. The protein is Hemoglobin subunit alpha-1/2 of Mandrillus sphinx (Mandrill).